A 361-amino-acid chain; its full sequence is Alanine racemase (361 aa).

K35 serves as the catalytic Proton acceptor; specific for D-alanine. K35 carries the post-translational modification N6-(pyridoxal phosphate)lysine. Residue R132 coordinates substrate. The Proton acceptor; specific for L-alanine role is filled by Y257. M305 provides a ligand contact to substrate.

This sequence belongs to the alanine racemase family. The cofactor is pyridoxal 5'-phosphate.

The catalysed reaction is L-alanine = D-alanine. It functions in the pathway amino-acid biosynthesis; D-alanine biosynthesis; D-alanine from L-alanine: step 1/1. Functionally, catalyzes the interconversion of L-alanine and D-alanine. May also act on other amino acids. The chain is Alanine racemase (alr) from Thioalkalivibrio sulfidiphilus (strain HL-EbGR7).